The primary structure comprises 239 residues: DNA repair protein RecO (239 aa).

The protein belongs to the RecO family.

Its function is as follows. Involved in DNA repair and RecF pathway recombination. The sequence is that of DNA repair protein RecO from Bifidobacterium longum subsp. infantis (strain ATCC 15697 / DSM 20088 / JCM 1222 / NCTC 11817 / S12).